We begin with the raw amino-acid sequence, 597 residues long: NADH-quinone oxidoreductase subunit C/D (597 aa).

Residues methionine 1–glutamate 188 form an NADH dehydrogenase I subunit C region. The interval lysine 211–arginine 597 is NADH dehydrogenase I subunit D.

The protein in the N-terminal section; belongs to the complex I 30 kDa subunit family. This sequence in the C-terminal section; belongs to the complex I 49 kDa subunit family. As to quaternary structure, NDH-1 is composed of 13 different subunits. Subunits NuoB, CD, E, F, and G constitute the peripheral sector of the complex.

The protein localises to the cell inner membrane. The catalysed reaction is a quinone + NADH + 5 H(+)(in) = a quinol + NAD(+) + 4 H(+)(out). Its function is as follows. NDH-1 shuttles electrons from NADH, via FMN and iron-sulfur (Fe-S) centers, to quinones in the respiratory chain. The immediate electron acceptor for the enzyme in this species is believed to be ubiquinone. Couples the redox reaction to proton translocation (for every two electrons transferred, four hydrogen ions are translocated across the cytoplasmic membrane), and thus conserves the redox energy in a proton gradient. The protein is NADH-quinone oxidoreductase subunit C/D of Buchnera aphidicola subsp. Baizongia pistaciae (strain Bp).